The chain runs to 657 residues: Threonine--tRNA ligase (657 aa).

The 64-residue stretch at 7–70 (SQTQVTVTLP…SEDASIEIVT (64 aa)) folds into the TGS domain. The catalytic stretch occupies residues 253–555 (DHRKLGAELE…LIEHTGGNFP (303 aa)). C351, H402, and H532 together coordinate Zn(2+).

This sequence belongs to the class-II aminoacyl-tRNA synthetase family. As to quaternary structure, homodimer. The cofactor is Zn(2+).

It is found in the cytoplasm. It carries out the reaction tRNA(Thr) + L-threonine + ATP = L-threonyl-tRNA(Thr) + AMP + diphosphate + H(+). Its function is as follows. Catalyzes the attachment of threonine to tRNA(Thr) in a two-step reaction: L-threonine is first activated by ATP to form Thr-AMP and then transferred to the acceptor end of tRNA(Thr). Also edits incorrectly charged L-seryl-tRNA(Thr). This is Threonine--tRNA ligase from Prosthecochloris aestuarii (strain DSM 271 / SK 413).